The chain runs to 374 residues: Aminomethyltransferase (374 aa).

This sequence belongs to the GcvT family. In terms of assembly, the glycine cleavage system is composed of four proteins: P, T, L and H.

It catalyses the reaction N(6)-[(R)-S(8)-aminomethyldihydrolipoyl]-L-lysyl-[protein] + (6S)-5,6,7,8-tetrahydrofolate = N(6)-[(R)-dihydrolipoyl]-L-lysyl-[protein] + (6R)-5,10-methylene-5,6,7,8-tetrahydrofolate + NH4(+). Its function is as follows. The glycine cleavage system catalyzes the degradation of glycine. This Caldanaerobacter subterraneus subsp. tengcongensis (strain DSM 15242 / JCM 11007 / NBRC 100824 / MB4) (Thermoanaerobacter tengcongensis) protein is Aminomethyltransferase.